Here is a 195-residue protein sequence, read N- to C-terminus: MDEKAAPGSETAIFAGGCFWGVQGVFQHVKGVSKAVSGYTGGAKDDAVYETVGTGRTGHAESVEITYDPSKVTYGQLLQVYFSVAHNPTQLNFQGPDSGTQYRSTIFAENDTQKQIAQSYIDQLDKAKLYPAPIVTTIETGKTFYPAENYHQDFLTLNPTYPYIVYNDLPKVANLKQLFPALYSEKPVLVLSASN.

The active site involves C18.

The protein belongs to the MsrA Met sulfoxide reductase family.

The enzyme catalyses L-methionyl-[protein] + [thioredoxin]-disulfide + H2O = L-methionyl-(S)-S-oxide-[protein] + [thioredoxin]-dithiol. The catalysed reaction is [thioredoxin]-disulfide + L-methionine + H2O = L-methionine (S)-S-oxide + [thioredoxin]-dithiol. Functionally, has an important function as a repair enzyme for proteins that have been inactivated by oxidation. Catalyzes the reversible oxidation-reduction of methionine sulfoxide in proteins to methionine. This Mesorhizobium japonicum (strain LMG 29417 / CECT 9101 / MAFF 303099) (Mesorhizobium loti (strain MAFF 303099)) protein is Peptide methionine sulfoxide reductase MsrA 2 (msrA2).